Consider the following 694-residue polypeptide: Heat shock protein homolog SSE1 (694 aa).

A disordered region spans residues 671–694; sequence AQRSADSEAKKDATPEGDAQMDLD. The span at 675 to 684 shows a compositional bias: basic and acidic residues; sequence ADSEAKKDAT.

It belongs to the heat shock protein 70 family.

The protein localises to the cytoplasm. The chain is Heat shock protein homolog SSE1 (SSE1) from Candida glabrata (strain ATCC 2001 / BCRC 20586 / JCM 3761 / NBRC 0622 / NRRL Y-65 / CBS 138) (Yeast).